A 585-amino-acid polypeptide reads, in one-letter code: Arginine--tRNA ligase (585 aa).

Residues 131–141 carry the 'HIGH' region motif; it reads ANPTGPMHVGH.

Belongs to the class-I aminoacyl-tRNA synthetase family. In terms of assembly, monomer.

Its subcellular location is the cytoplasm. It catalyses the reaction tRNA(Arg) + L-arginine + ATP = L-arginyl-tRNA(Arg) + AMP + diphosphate. In Bartonella henselae (strain ATCC 49882 / DSM 28221 / CCUG 30454 / Houston 1) (Rochalimaea henselae), this protein is Arginine--tRNA ligase.